Consider the following 1204-residue polypeptide: ATP-dependent helicase/nuclease subunit A (1204 aa).

Residues 2–469 (TKFTKEQNQA…IVLSDNFRST (468 aa)) enclose the UvrD-like helicase ATP-binding domain. 23–30 (ASAGSGKT) contributes to the ATP binding site. In terms of domain architecture, UvrD-like helicase C-terminal spans 496–784 (EGQLQFGATY…KLMTIHASKG (289 aa)).

Belongs to the helicase family. AddA subfamily. As to quaternary structure, heterodimer of AddA and AddB/RexB. The cofactor is Mg(2+).

It carries out the reaction Couples ATP hydrolysis with the unwinding of duplex DNA by translocating in the 3'-5' direction.. The catalysed reaction is ATP + H2O = ADP + phosphate + H(+). The heterodimer acts as both an ATP-dependent DNA helicase and an ATP-dependent, dual-direction single-stranded exonuclease. Recognizes the chi site generating a DNA molecule suitable for the initiation of homologous recombination. The AddA nuclease domain is required for chi fragment generation; this subunit has the helicase and 3' -&gt; 5' nuclease activities. In Lactobacillus johnsonii (strain CNCM I-12250 / La1 / NCC 533), this protein is ATP-dependent helicase/nuclease subunit A.